Reading from the N-terminus, the 839-residue chain is MAIGITACVLSLINYQGLAYSAALINEPIQACVIAREVDLTDDIRTKFAQCLGWQADQSSPVCLGFYKPITVTPLASPDEVRILADTASFYRTQRSTLSGHVEMQQGQRVVNAQTAYVYRDPKTNEVTKIEFLNHVRYLEPDRMMIARKAVVYPQDKSGEVEDVLYRFNTNRSNALLPAWGRASLIKRFANQDYFLKEATYTTCAPQDKAWAIEAESISINNEKGKGIARNAKLRIHEWPVLYTPYLSFPTNRDRKSGFLMPIVGYSNVGGADLGIPYYWNMAPNYDMTLVPHIYTKRGLMLGGQFRYLTSKSTGTFNGNFLPKDKAFGRFLQDNEVEFPQIRGLSTNRWEVNFVDSTQFLSDLQLNVNFQQVSDDYYLQDFSTNLASVTQRQLLRQADLTYTTENWTFRGMGQSYQTLHPINEIPVSPVYERLPQLMARGYYDDLPFNAQLNILGQYDQFHWPNDSWNIALNNMPQGPRFHLNPILSVPMMKPWGYVTPSVQFVENYYDISRNYTWGTSRANYNLTIPRYSLDGGLYFERDLHLKGTYYIQTLEPRLFYLRVPYYNQTLIPVYDSGFMIFNVDQLFRTNRFSGFDRIGDANQLSYALTTRWLEDESGAEKANFSIGQIKYFSERRVQLCQSPTGFCTDNPDTFGNLSSTFGTSPVASRAVYKFNPAWGITGDYIWDPATRATNNADLNLHYQPARNAIINGGYSYLVNGDVTQVRNNDTENNALHQAILSAAWPLSEKWSGIGAYSYNISKNYSMMSFLGVQYDSCCWAMRILGGRTFRSLNEEFEPRYNNNIYLQILLKGLGSVASSDPSGILNTYIPGYYDPFRRR.

An N-terminal signal peptide occupies residues 1-21 (MAIGITACVLSLINYQGLAYS).

The protein belongs to the LptD family. As to quaternary structure, component of the lipopolysaccharide transport and assembly complex. Interacts with LptE and LptA.

The protein resides in the cell outer membrane. In terms of biological role, together with LptE, is involved in the assembly of lipopolysaccharide (LPS) at the surface of the outer membrane. The sequence is that of LPS-assembly protein LptD from Legionella pneumophila (strain Lens).